A 527-amino-acid chain; its full sequence is Baicalin-beta-D-glucuronidase (527 aa).

Positions 1-25 (MGFQVWQKGLCVLCFSLIFICGVIG) are cleaved as a signal peptide. The Proton donor role is filled by glutamate 212. Glutamate 329 acts as the Nucleophile in catalysis.

It belongs to the glycosyl hydrolase 79 family. Homotetramer.

The enzyme catalyses baicalin + H2O = baicalein + D-glucuronate + H(+). Its function is as follows. Beta-glucuronidase involved in the initiation of H(2)O(2) metabolism via the production of baicalein. Unable to use glycyrrhizin, gypsogenin-3-O-D-glucuronide, luteolin-7-O-D-glucoside and apigenin-7-O-D-glucoside as substrates. The protein is Baicalin-beta-D-glucuronidase (SGUS) of Scutellaria baicalensis (Baical skullcap).